The sequence spans 136 residues: Monothiol glutaredoxin-S3 (136 aa).

Residues 18–135 (EREVRRAVEE…PVLKQAGALW (118 aa)) enclose the Glutaredoxin domain. Position 38 (C38) interacts with [2Fe-2S] cluster. A Responsive for interaction with TGA factors motif is present at residues 133 to 136 (ALWL).

The protein belongs to the glutaredoxin family. CC-type subfamily.

The protein resides in the cytoplasm. The protein localises to the nucleus. May only reduce GSH-thiol disulfides, but not protein disulfides. This chain is Monothiol glutaredoxin-S3 (GRXS3), found in Oryza sativa subsp. japonica (Rice).